Consider the following 76-residue polypeptide: Protein CsbA (76 aa).

The Extracellular segment spans residues 1–5 (MITKA). Residues 6–22 (VFALFFPFMLVVLFTRV) form a helical membrane-spanning segment. Residues 23–27 (TFNHY) lie on the Cytoplasmic side of the membrane. Residues 28 to 44 (VAIALTAALLFASYLKG) form a helical membrane-spanning segment. Residues 45–49 (YTETY) lie on the Extracellular side of the membrane. Residues 50-66 (FIVGLDVVSLVAGGLYM) traverse the membrane as a helical segment. The Cytoplasmic segment spans residues 67-76 (AKKAAEKKEE).

It is found in the cell membrane. The chain is Protein CsbA (csbA) from Bacillus subtilis (strain 168).